Consider the following 401-residue polypeptide: S-adenosylmethionine synthase 1 (401 aa).

Residue histidine 15 coordinates ATP. Mg(2+) is bound at residue aspartate 17. A K(+)-binding site is contributed by glutamate 43. Positions 56 and 98 each coordinate L-methionine. The interval 98–108 (QSPDIAQGVDK) is flexible loop. ATP is bound by residues 173–175 (DGK), 246–247 (RF), aspartate 255, 261–262 (RK), alanine 278, and lysine 282. Aspartate 255 is a binding site for L-methionine. Residue lysine 286 participates in L-methionine binding.

Belongs to the AdoMet synthase family. In terms of assembly, homotetramer; dimer of dimers. Requires Mg(2+) as cofactor. K(+) is required as a cofactor.

The protein localises to the cytoplasm. The catalysed reaction is L-methionine + ATP + H2O = S-adenosyl-L-methionine + phosphate + diphosphate. The protein operates within amino-acid biosynthesis; S-adenosyl-L-methionine biosynthesis; S-adenosyl-L-methionine from L-methionine: step 1/1. Functionally, catalyzes the formation of S-adenosylmethionine (AdoMet) from methionine and ATP. The overall synthetic reaction is composed of two sequential steps, AdoMet formation and the subsequent tripolyphosphate hydrolysis which occurs prior to release of AdoMet from the enzyme. In Frankia casuarinae (strain DSM 45818 / CECT 9043 / HFP020203 / CcI3), this protein is S-adenosylmethionine synthase 1.